The chain runs to 432 residues: Enolase (432 aa).

Residues 41-64 (QVPSGASTGSFEAHELRDGDPKRY) are disordered. The span at 52 to 64 (EAHELRDGDPKRY) shows a compositional bias: basic and acidic residues. Glutamine 168 contributes to the (2R)-2-phosphoglycerate binding site. Residue glutamate 211 is the Proton donor of the active site. Mg(2+) is bound by residues aspartate 248, glutamate 289, and aspartate 316. (2R)-2-phosphoglycerate is bound by residues lysine 341, arginine 370, serine 371, and lysine 392. The active-site Proton acceptor is lysine 341.

Belongs to the enolase family. Mg(2+) is required as a cofactor.

Its subcellular location is the cytoplasm. It is found in the secreted. The protein localises to the cell surface. The catalysed reaction is (2R)-2-phosphoglycerate = phosphoenolpyruvate + H2O. It functions in the pathway carbohydrate degradation; glycolysis; pyruvate from D-glyceraldehyde 3-phosphate: step 4/5. Its function is as follows. Catalyzes the reversible conversion of 2-phosphoglycerate (2-PG) into phosphoenolpyruvate (PEP). It is essential for the degradation of carbohydrates via glycolysis. The polypeptide is Enolase (Synechocystis sp. (strain ATCC 27184 / PCC 6803 / Kazusa)).